The primary structure comprises 228 residues: Octanoyltransferase (228 aa).

Residues 31-212 (EETDGILILL…KFEEVFEIKF (182 aa)) enclose the BPL/LPL catalytic domain. Substrate contacts are provided by residues 76 to 83 (RGGKITFH), 143 to 145 (AIG), and 156 to 158 (GIA). The active-site Acyl-thioester intermediate is Cys174.

This sequence belongs to the LipB family.

Its subcellular location is the cytoplasm. It catalyses the reaction octanoyl-[ACP] + L-lysyl-[protein] = N(6)-octanoyl-L-lysyl-[protein] + holo-[ACP] + H(+). Its pathway is protein modification; protein lipoylation via endogenous pathway; protein N(6)-(lipoyl)lysine from octanoyl-[acyl-carrier-protein]: step 1/2. In terms of biological role, catalyzes the transfer of endogenously produced octanoic acid from octanoyl-acyl-carrier-protein onto the lipoyl domains of lipoate-dependent enzymes. Lipoyl-ACP can also act as a substrate although octanoyl-ACP is likely to be the physiological substrate. This chain is Octanoyltransferase, found in Caldanaerobacter subterraneus subsp. tengcongensis (strain DSM 15242 / JCM 11007 / NBRC 100824 / MB4) (Thermoanaerobacter tengcongensis).